A 364-amino-acid chain; its full sequence is Tyrosyl-DNA phosphodiesterase 2 (364 aa).

Methionine 1 bears the N-acetylmethionine mark. Residues methionine 1 to glycine 10 are compositionally biased toward low complexity. A disordered region spans residues methionine 1–glutamate 21. A Glycyl lysine isopeptide (Lys-Gly) (interchain with G-Cter in SUMO2) cross-link involves residue lysine 23. A disordered region spans residues glutamate 68–valine 108. Phosphothreonine; by ACVR1B is present on residues threonine 88 and threonine 92. The residue at position 95 (serine 95) is a Phosphoserine. The interval asparagine 122–leucine 126 is interaction with 5' end of substrate DNA. Residues aspartate 124 and glutamate 154 each coordinate Mg(2+). The segment at histidine 228–arginine 233 is interaction with 5' end of substrate DNA. Aspartate 264 serves as the catalytic Proton donor/acceptor. The interval asparagine 266–arginine 268 is interaction with 5' end of substrate DNA.

The protein belongs to the CCR4/nocturin family. In terms of assembly, interacts with TRAF2, TRAF3, TRAF5, TRAF6, TNFRSF8/CD30, TNFRSF5/CD40, TNFRSF1B/TNF-R75, ETS1, ETS2, FLI1, SMAD3 and ACVR1B/ALK4. Mg(2+) serves as cofactor. Mn(2+) is required as a cofactor. Post-translationally, ubiquitinated by TRAF6.

It is found in the nucleus. Its subcellular location is the PML body. The protein localises to the nucleolus. It localises to the cytoplasm. Its function is as follows. DNA repair enzyme that can remove a variety of covalent adducts from DNA through hydrolysis of a 5'-phosphodiester bond, giving rise to DNA with a free 5' phosphate. Catalyzes the hydrolysis of dead-end complexes between DNA and the topoisomerase 2 (TOP2) active site tyrosine residue. The 5'-tyrosyl DNA phosphodiesterase activity can enable the repair of TOP2-induced DNA double-strand breaks/DSBs without the need for nuclease activity, creating a 'clean' DSB with 5'-phosphate termini that are ready for ligation. Thereby, protects the transcription of many genes involved in neurological development and maintenance from the abortive activity of TOP2. Hydrolyzes 5'-phosphoglycolates on protruding 5' ends on DSBs due to DNA damage by radiation and free radicals. Has preference for single-stranded DNA or duplex DNA with a 4 base pair overhang as substrate. Also has 3'-tyrosyl DNA phosphodiesterase activity, but less efficiently and much slower than TDP1. Constitutes the major if not only 5'-tyrosyl-DNA phosphodiesterase in cells. Also acts as an adapter by participating in the specific activation of MAP3K7/TAK1 in response to TGF-beta: associates with components of the TGF-beta receptor-TRAF6-TAK1 signaling module and promotes their ubiquitination dependent complex formation. Involved in non-canonical TGF-beta induced signaling routes. May also act as a negative regulator of ETS1 and may inhibit NF-kappa-B activation. Acts as a regulator of ribosome biogenesis following stress. The chain is Tyrosyl-DNA phosphodiesterase 2 (TDP2) from Bos taurus (Bovine).